The primary structure comprises 38 residues: Large ribosomal subunit protein bL36 (38 aa).

Belongs to the bacterial ribosomal protein bL36 family.

In Cellvibrio japonicus (strain Ueda107) (Pseudomonas fluorescens subsp. cellulosa), this protein is Large ribosomal subunit protein bL36.